A 363-amino-acid polypeptide reads, in one-letter code: Protein-arginine kinase (363 aa).

The 231-residue stretch at isoleucine 24–alanine 254 folds into the Phosphagen kinase C-terminal domain. ATP-binding positions include serine 27–arginine 31, histidine 92, arginine 125, arginine 176–methionine 180, and arginine 207–glutamate 212. Residues arginine 337–alanine 342 carry the RDXXRA motif of the pArg binding pocket involved in allosteric regulation motif.

It belongs to the ATP:guanido phosphotransferase family.

It carries out the reaction L-arginyl-[protein] + ATP = N(omega)-phospho-L-arginyl-[protein] + ADP + H(+). Appears to be allosterically activated by the binding of pArg-containing polypeptides to the pArg-binding pocket localized in the C-terminal domain of McsB. In terms of biological role, catalyzes the specific phosphorylation of arginine residues in a large number of proteins. Is part of the bacterial stress response system. Protein arginine phosphorylation has a physiologically important role and is involved in the regulation of many critical cellular processes, such as protein homeostasis, motility, competence, and stringent and stress responses, by regulating gene expression and protein activity. This chain is Protein-arginine kinase, found in Bacillus velezensis (strain DSM 23117 / BGSC 10A6 / LMG 26770 / FZB42) (Bacillus amyloliquefaciens subsp. plantarum).